The sequence spans 352 residues: Pyruvate dehydrogenase E1 component subunit beta, mitochondrial (352 aa).

The transit peptide at 1 to 21 directs the protein to the mitochondrion; that stretch reads MALRKCGNLFVARLAGTSTRA. Glu81 is a binding site for thiamine diphosphate. K(+) is bound by residues Ile134, Ala182, Ile183, Asp185, and Asn187.

In terms of assembly, tetramer of 2 alpha and 2 beta subunits. Requires thiamine diphosphate as cofactor.

The protein resides in the mitochondrion matrix. It catalyses the reaction N(6)-[(R)-lipoyl]-L-lysyl-[protein] + pyruvate + H(+) = N(6)-[(R)-S(8)-acetyldihydrolipoyl]-L-lysyl-[protein] + CO2. Functionally, the pyruvate dehydrogenase complex catalyzes the overall conversion of pyruvate to acetyl-CoA and CO(2). It contains multiple copies of three enzymatic components: pyruvate dehydrogenase (E1), dihydrolipoamide acetyltransferase (E2) and lipoamide dehydrogenase (E3). The sequence is that of Pyruvate dehydrogenase E1 component subunit beta, mitochondrial (pdhb-1) from Caenorhabditis elegans.